A 197-amino-acid chain; its full sequence is Protein GrpE (197 aa).

Residues Met-1–Arg-40 form a disordered region.

The protein belongs to the GrpE family. Homodimer.

It localises to the cytoplasm. In terms of biological role, participates actively in the response to hyperosmotic and heat shock by preventing the aggregation of stress-denatured proteins, in association with DnaK and GrpE. It is the nucleotide exchange factor for DnaK and may function as a thermosensor. Unfolded proteins bind initially to DnaJ; upon interaction with the DnaJ-bound protein, DnaK hydrolyzes its bound ATP, resulting in the formation of a stable complex. GrpE releases ADP from DnaK; ATP binding to DnaK triggers the release of the substrate protein, thus completing the reaction cycle. Several rounds of ATP-dependent interactions between DnaJ, DnaK and GrpE are required for fully efficient folding. The polypeptide is Protein GrpE (Escherichia coli (strain K12 / DH10B)).